Here is a 151-residue protein sequence, read N- to C-terminus: uncharacterized protein (151 aa).

The protein to equivalent protein in phage 82.

This is an uncharacterized protein from Escherichia coli (strain K12).